A 281-amino-acid chain; its full sequence is Pantothenate synthetase (281 aa).

Met-31–His-38 is an ATP binding site. His-38 (proton donor) is an active-site residue. A (R)-pantoate-binding site is contributed by Gln-62. Gln-62 contacts beta-alanine. Residue Gly-150–Asp-153 coordinates ATP. A (R)-pantoate-binding site is contributed by Gln-156. Residues Val-179 and Met-187–Arg-190 each bind ATP.

Belongs to the pantothenate synthetase family. Homodimer.

Its subcellular location is the cytoplasm. It carries out the reaction (R)-pantoate + beta-alanine + ATP = (R)-pantothenate + AMP + diphosphate + H(+). It participates in cofactor biosynthesis; (R)-pantothenate biosynthesis; (R)-pantothenate from (R)-pantoate and beta-alanine: step 1/1. Catalyzes the condensation of pantoate with beta-alanine in an ATP-dependent reaction via a pantoyl-adenylate intermediate. This chain is Pantothenate synthetase, found in Xylella fastidiosa (strain 9a5c).